Here is a 137-residue protein sequence, read N- to C-terminus: Small ribosomal subunit protein uS8 (137 aa).

The protein belongs to the universal ribosomal protein uS8 family. In terms of assembly, part of the 30S ribosomal subunit. Contacts proteins S5 and S12.

Its function is as follows. One of the primary rRNA binding proteins, it binds directly to 16S rRNA central domain where it helps coordinate assembly of the platform of the 30S subunit. This Metamycoplasma arthritidis (strain 158L3-1) (Mycoplasma arthritidis) protein is Small ribosomal subunit protein uS8.